The sequence spans 938 residues: Probable outer membrane protein pmp15 (938 aa).

A signal peptide spans 1-17; the sequence is MRFFCFGMLLPFTFVLA. The 280-residue stretch at 659–938 folds into the Autotransporter domain; it reads DEEKGHAASL…YLNVASRMRF (280 aa).

The protein belongs to the PMP outer membrane protein family.

It localises to the secreted. It is found in the cell wall. Its subcellular location is the cell outer membrane. This Chlamydia pneumoniae (Chlamydophila pneumoniae) protein is Probable outer membrane protein pmp15 (pmp15).